The following is a 469-amino-acid chain: RuvB-like helicase 2 (469 aa).

73–80 lines the ATP pocket; the sequence is GEPGTGKT.

This sequence belongs to the RuvB family. Forms homohexameric rings. May form a dodecamer with rvb1 made of two stacked hexameric rings. Component of the chromatin remodeling Ino80 complex. Component of the RNA polymerase II holoenzyme complex.

It is found in the nucleus. The catalysed reaction is ATP + H2O = ADP + phosphate + H(+). Functionally, has double-stranded DNA-stimulated ATPase and ATP-dependent DNA helicase (5' to 3') activity suggesting a role in nuclear processes such as recombination and transcription. Proposed core component of the chromatin remodeling Ino80 complex which is involved in transcriptional regulation, DNA replication and probably DNA repair. The polypeptide is RuvB-like helicase 2 (rvb2) (Dictyostelium discoideum (Social amoeba)).